A 117-amino-acid chain; its full sequence is Large ribosomal subunit protein uL18 (117 aa).

This sequence belongs to the universal ribosomal protein uL18 family. In terms of assembly, part of the 50S ribosomal subunit; part of the 5S rRNA/L5/L18/L25 subcomplex. Contacts the 5S and 23S rRNAs.

Functionally, this is one of the proteins that bind and probably mediate the attachment of the 5S RNA into the large ribosomal subunit, where it forms part of the central protuberance. The protein is Large ribosomal subunit protein uL18 of Vibrio vulnificus (strain CMCP6).